The chain runs to 351 residues: Glycerol-1-phosphate dehydrogenase [NAD(P)+] (351 aa).

NAD(+) is bound by residues 98–102 (GSIID) and 120–123 (TTAS). D125 serves as a coordination point for substrate. S129 is an NAD(+) binding site. Position 172 (D172) interacts with substrate. Residues D172 and H252 each coordinate Zn(2+). Residue H256 participates in substrate binding. H268 contributes to the Zn(2+) binding site.

The protein belongs to the glycerol-1-phosphate dehydrogenase family. Zn(2+) serves as cofactor.

It is found in the cytoplasm. The enzyme catalyses sn-glycerol 1-phosphate + NAD(+) = dihydroxyacetone phosphate + NADH + H(+). It carries out the reaction sn-glycerol 1-phosphate + NADP(+) = dihydroxyacetone phosphate + NADPH + H(+). Its pathway is membrane lipid metabolism; glycerophospholipid metabolism. Its function is as follows. Catalyzes the NAD(P)H-dependent reduction of dihydroxyacetonephosphate (DHAP or glycerone phosphate) to glycerol 1-phosphate (G1P). The G1P thus generated is used as the glycerophosphate backbone of phospholipids in the cellular membranes of Archaea. This chain is Glycerol-1-phosphate dehydrogenase [NAD(P)+], found in Thermococcus kodakarensis (strain ATCC BAA-918 / JCM 12380 / KOD1) (Pyrococcus kodakaraensis (strain KOD1)).